The primary structure comprises 412 residues: Clamp protein VP6 (412 aa).

It belongs to the reoviridae clamp protein family. In terms of assembly, interacts with capsid proteins VP3, VP5 and VP7.

The protein resides in the virion. Located at the interface of the incomplete T=13 outer capsid and the pseudo T=2 inner capsid, 120 VP6 subunits clamp and stabilizes the inner capsid shell. The polypeptide is Clamp protein VP6 (S8) (Aquareovirus C (isolate Golden shiner/USA/GSRV/1977) (AQRV-C)).